The primary structure comprises 180 residues: NADH-quinone oxidoreductase subunit I (180 aa).

4Fe-4S ferredoxin-type domains lie at 50-80 (LTRD…LQKA) and 90-119 (EFFR…MTPD). 8 residues coordinate [4Fe-4S] cluster: Cys60, Cys63, Cys66, Cys70, Cys99, Cys102, Cys105, and Cys109.

Belongs to the complex I 23 kDa subunit family. As to quaternary structure, NDH-1 is composed of 14 different subunits. Subunits NuoA, H, J, K, L, M, N constitute the membrane sector of the complex. [4Fe-4S] cluster serves as cofactor.

It is found in the cell inner membrane. The catalysed reaction is a quinone + NADH + 5 H(+)(in) = a quinol + NAD(+) + 4 H(+)(out). In terms of biological role, NDH-1 shuttles electrons from NADH, via FMN and iron-sulfur (Fe-S) centers, to quinones in the respiratory chain. The immediate electron acceptor for the enzyme in this species is believed to be ubiquinone. Couples the redox reaction to proton translocation (for every two electrons transferred, four hydrogen ions are translocated across the cytoplasmic membrane), and thus conserves the redox energy in a proton gradient. The polypeptide is NADH-quinone oxidoreductase subunit I (Acinetobacter baylyi (strain ATCC 33305 / BD413 / ADP1)).